A 553-amino-acid chain; its full sequence is Probable malate:quinone oxidoreductase (553 aa).

The interval 524-553 is disordered; that stretch reads PPPKIDLGAPSQATGNAPARPAKASADMAL.

Belongs to the MQO family. FAD is required as a cofactor.

It carries out the reaction (S)-malate + a quinone = a quinol + oxaloacetate. The protein operates within carbohydrate metabolism; tricarboxylic acid cycle; oxaloacetate from (S)-malate (quinone route): step 1/1. This is Probable malate:quinone oxidoreductase from Burkholderia cenocepacia (strain HI2424).